We begin with the raw amino-acid sequence, 122 residues long: Large ribosomal subunit protein uL14 (122 aa).

Belongs to the universal ribosomal protein uL14 family. As to quaternary structure, part of the 50S ribosomal subunit. Forms a cluster with proteins L3 and L19. In the 70S ribosome, L14 and L19 interact and together make contacts with the 16S rRNA in bridges B5 and B8.

Its function is as follows. Binds to 23S rRNA. Forms part of two intersubunit bridges in the 70S ribosome. In Mycobacteroides abscessus (strain ATCC 19977 / DSM 44196 / CCUG 20993 / CIP 104536 / JCM 13569 / NCTC 13031 / TMC 1543 / L948) (Mycobacterium abscessus), this protein is Large ribosomal subunit protein uL14.